Reading from the N-terminus, the 198-residue chain is Holliday junction branch migration complex subunit RuvA (198 aa).

The domain I stretch occupies residues 1–64; the sequence is MYEYIKGKYI…EDFIGLYGFD (64 aa). Residues 65–143 form a domain II region; it reads SKEELEMFKL…PDELVDSSLE (79 aa). The tract at residues 144-149 is flexible linker; sequence IDTKDN. The tract at residues 150 to 198 is domain III; the sequence is ENVMALSEALSALIALGYSEKEAESVLKKIDKNDSVENIIKNALKALMG.

This sequence belongs to the RuvA family. In terms of assembly, homotetramer. Forms an RuvA(8)-RuvB(12)-Holliday junction (HJ) complex. HJ DNA is sandwiched between 2 RuvA tetramers; dsDNA enters through RuvA and exits via RuvB. An RuvB hexamer assembles on each DNA strand where it exits the tetramer. Each RuvB hexamer is contacted by two RuvA subunits (via domain III) on 2 adjacent RuvB subunits; this complex drives branch migration. In the full resolvosome a probable DNA-RuvA(4)-RuvB(12)-RuvC(2) complex forms which resolves the HJ.

Its subcellular location is the cytoplasm. Functionally, the RuvA-RuvB-RuvC complex processes Holliday junction (HJ) DNA during genetic recombination and DNA repair, while the RuvA-RuvB complex plays an important role in the rescue of blocked DNA replication forks via replication fork reversal (RFR). RuvA specifically binds to HJ cruciform DNA, conferring on it an open structure. The RuvB hexamer acts as an ATP-dependent pump, pulling dsDNA into and through the RuvAB complex. HJ branch migration allows RuvC to scan DNA until it finds its consensus sequence, where it cleaves and resolves the cruciform DNA. The chain is Holliday junction branch migration complex subunit RuvA from Clostridium beijerinckii (strain ATCC 51743 / NCIMB 8052) (Clostridium acetobutylicum).